Consider the following 396-residue polypeptide: Protein TOC75-4, chloroplastic (396 aa).

The Chloroplast intermembrane portion of the chain corresponds to 1 to 23; sequence MEAVKEAVRKIKSLVIPHADEKD. A beta stranded transmembrane segment spans residues 24–32; it reads NGIVFEIKL. Over 33–87 the chain is Cytoplasmic; the sequence is NETDQRVEKWGLDPSLDFFEVTGNCNLGRPNSEGSNQSLMGSVTIRNIFNPKLDD. Residues 88-96 form a beta stranded membrane-spanning segment; sequence LLSKIEYVR. Residues 97–140 lie on the Chloroplast intermembrane side of the membrane; it reads FLEAVKKPRNRTFKTSFFNSRKLSPVFTGGPGYEDLVPPMFVGR. Residues 141 to 148 traverse the membrane as a beta stranded segment; it reads DCLKATIT. At 149 to 156 the chain is on the cytoplasmic side; it reads ENLTRQRE. Residues 157-164 form a beta stranded membrane-spanning segment; that stretch reads LTYGVMFE. Over 165 to 271 the chain is Chloroplast intermembrane; the sequence is EIITRDENRR…VEEGSDKPQP (107 aa). A beta stranded transmembrane segment spans residues 272 to 280; sequence PVLVLHGRY. The Cytoplasmic portion of the chain corresponds to 281–292; sequence GGCIGDLPSYDV. Residues 293–301 traverse the membrane as a beta stranded segment; sequence FALGGPNSV. Over 302-363 the chain is Chloroplast intermembrane; sequence RGYSMGELGA…LYRKMGHGSS (62 aa). Residues 364 to 370 form a beta stranded membrane-spanning segment; it reads YGLGVKL. Over 371–384 the chain is Cytoplasmic; that stretch reads GMVRAEYTVRHNRG. The beta stranded transmembrane segment at 385–392 threads the bilayer; that stretch reads TGALFLRF. Over 393 to 396 the chain is Chloroplast intermembrane; that stretch reads GERY.

This sequence belongs to the TOC75 family. As to quaternary structure, part of the TOC core complex that includes a protein for the specific recognition of transit peptides surrounded by a ring composed of four proteins forming translocation channels, and four to five GTP-binding proteins providing energy. This core complex can interact with components of the TIC complex to form a larger import complex. Chloroplastic protein precursors also interacts with these complexes. Expressed ubiquitously at low levels.

The protein localises to the plastid. The protein resides in the chloroplast outer membrane. Its function is as follows. Mediates the insertion of proteins targeted to the outer membrane of chloroplasts. Required for the import of protein precursors into chloroplasts. Forms the voltage-dependent preprotein translocation channels (hydrophilic beta barrel) of the TOC complex in the chloroplastic outer membrane. Required for etioplast formation and/or etioplast-chloroplast transition during deetiolation. This Arabidopsis thaliana (Mouse-ear cress) protein is Protein TOC75-4, chloroplastic (TOC75-4).